Reading from the N-terminus, the 255-residue chain is 3-dehydroquinate dehydratase (255 aa).

3-dehydroquinate contacts are provided by residues 47–49 and R83; that span reads EWR. H144 functions as the Proton donor/acceptor in the catalytic mechanism. K171 serves as the catalytic Schiff-base intermediate with substrate. Positions 214, 233, and 237 each coordinate 3-dehydroquinate.

It belongs to the type-I 3-dehydroquinase family. Homodimer.

It catalyses the reaction 3-dehydroquinate = 3-dehydroshikimate + H2O. It functions in the pathway metabolic intermediate biosynthesis; chorismate biosynthesis; chorismate from D-erythrose 4-phosphate and phosphoenolpyruvate: step 3/7. Its function is as follows. Involved in the third step of the chorismate pathway, which leads to the biosynthesis of aromatic amino acids. Catalyzes the cis-dehydration of 3-dehydroquinate (DHQ) and introduces the first double bond of the aromatic ring to yield 3-dehydroshikimate. This is 3-dehydroquinate dehydratase from Alkaliphilus oremlandii (strain OhILAs) (Clostridium oremlandii (strain OhILAs)).